The chain runs to 466 residues: Signal recognition particle 54 kDa protein (466 aa).

Residues G104–T111, D184–R188, and T242–D245 each bind GTP. A disordered region spans residues Q446–G466. Residues Q448–G466 are compositionally biased toward gly residues.

It belongs to the GTP-binding SRP family. SRP54 subfamily. Part of the signal recognition particle protein translocation system, which is composed of SRP and FtsY. Archaeal SRP consists of a 7S RNA molecule of 300 nucleotides and two protein subunits: SRP54 and SRP19.

The protein localises to the cytoplasm. The catalysed reaction is GTP + H2O = GDP + phosphate + H(+). Functionally, involved in targeting and insertion of nascent membrane proteins into the cytoplasmic membrane. Binds to the hydrophobic signal sequence of the ribosome-nascent chain (RNC) as it emerges from the ribosomes. The SRP-RNC complex is then targeted to the cytoplasmic membrane where it interacts with the SRP receptor FtsY. The chain is Signal recognition particle 54 kDa protein from Haloquadratum walsbyi (strain DSM 16790 / HBSQ001).